A 170-amino-acid chain; its full sequence is Histone H1.9 (170 aa).

One can recognise an H15 domain in the interval 34-108 (RKPTMSYVIL…GASGSLCLCK (75 aa)). Serine 56 bears the Phosphoserine mark. A disordered region spans residues 118-140 (AKRCQDRQKSQKPQKPGQRESEP).

This sequence belongs to the histone H1/H5 family. Expressed exclusively in the testis by haploid germ cells (at protein level).

The protein localises to the nucleus. Its subcellular location is the chromosome. Functionally, DNA-binding protein that may be implicated in chromatin remodeling and/or transcriptional regulation during spermiogenesis, the process of spermatid maturation into spermatozoa. This chain is Histone H1.9, found in Mus musculus (Mouse).